The chain runs to 302 residues: MEKLREELLQANVGTVKENERMASHTTIKIGGPADLFVEPKHIDGLKKTMEIVRKYNVPWRAIGRGSNLLVRDGGIEGVVIKLGEGLDDLYIHDTEVTVGGGYSLIKLATVISKQGLSGLEFAGGIPGTVGGAVYMNAGAHGSDMSRIVKKAQILFEDGTIEWLTNEEMEFSYRTSVLQKKRKGICIAATLEMKKGNHDEIVAAMQKNKDYRRETQPWNYPCAGSIFRNPLPQYAGQLIEQAGLKGYTIGGAKISEQHANFIVNAGGATANDVLELIDYVKKTIYDLYGVSLQTEVEIVGRK.

Residues 30–196 form the FAD-binding PCMH-type domain; sequence IGGPADLFVE…IAATLEMKKG (167 aa). R174 is an active-site residue. The active-site Proton donor is the S225. E295 is a catalytic residue.

The protein belongs to the MurB family. FAD serves as cofactor.

It localises to the cytoplasm. It catalyses the reaction UDP-N-acetyl-alpha-D-muramate + NADP(+) = UDP-N-acetyl-3-O-(1-carboxyvinyl)-alpha-D-glucosamine + NADPH + H(+). It functions in the pathway cell wall biogenesis; peptidoglycan biosynthesis. In terms of biological role, cell wall formation. In Anoxybacillus flavithermus (strain DSM 21510 / WK1), this protein is UDP-N-acetylenolpyruvoylglucosamine reductase.